A 263-amino-acid polypeptide reads, in one-letter code: 4-hydroxy-2-oxo-heptane-1,7-dioate aldolase (263 aa).

Catalysis depends on histidine 45, which acts as the Proton acceptor. Residue glutamine 147 participates in substrate binding. Position 149 (glutamate 149) interacts with a divalent metal cation. Alanine 174 and aspartate 175 together coordinate substrate. Aspartate 175 contacts a divalent metal cation.

Belongs to the HpcH/HpaI aldolase family. Homohexamer; trimer of dimers. The cofactor is a divalent metal cation.

It carries out the reaction 4-hydroxy-2-oxoheptanedioate = succinate semialdehyde + pyruvate. It participates in aromatic compound metabolism; 4-hydroxyphenylacetate degradation; pyruvate and succinate semialdehyde from 4-hydroxyphenylacetate: step 7/7. In terms of biological role, catalyzes the reversible retro-aldol cleavage of 4-hydroxy-2-ketoheptane-1,7-dioate (HKHD) to pyruvate and succinic semialdehyde. This Salmonella enteritidis PT4 (strain P125109) protein is 4-hydroxy-2-oxo-heptane-1,7-dioate aldolase.